We begin with the raw amino-acid sequence, 557 residues long: IgE-binding protein (557 aa).

Residues 113–172 (DGLGKPALSSSEAGEESSSEETDWEEEAAHYQPANWSRKKPKAAGEGQFADWPQGSRLQG) form a disordered region. The segment covering 125-138 (AGEESSSEETDWEE) has biased composition (acidic residues). Positions 344 to 534 (TAIRPGRRSR…TAAERHVQSQ (191 aa)) constitute an Integrase catalytic domain.

This chain is IgE-binding protein (Iap), found in Mus musculus (Mouse).